A 294-amino-acid chain; its full sequence is Putative sugar lactone lactonase (294 aa).

The a divalent metal cation site is built by glutamate 21, asparagine 150, and aspartate 201. Aspartate 201 serves as the catalytic Proton donor/acceptor.

This sequence belongs to the SMP-30/CGR1 family. A divalent metal cation serves as cofactor.

Its function is as follows. Involved in the degradation of galactose via the DeLey-Doudoroff pathway. This is Putative sugar lactone lactonase from Rhizobium meliloti (strain 1021) (Ensifer meliloti).